Reading from the N-terminus, the 170-residue chain is uncharacterized protein (170 aa).

This is an uncharacterized protein from Ureaplasma parvum serovar 3 (strain ATCC 700970).